Here is a 307-residue protein sequence, read N- to C-terminus: Small ribosomal subunit biogenesis GTPase RsgA (307 aa).

A CP-type G domain is found at 82-240; that stretch reads GRYGERIVVA…IADTPGLREV (159 aa). Residues 131–134 and 182–190 each bind GTP; these read NKAD and GPSGVGKSS. 4 residues coordinate Zn(2+): cysteine 264, cysteine 269, histidine 271, and cysteine 277.

This sequence belongs to the TRAFAC class YlqF/YawG GTPase family. RsgA subfamily. As to quaternary structure, monomer. Associates with 30S ribosomal subunit, binds 16S rRNA. Zn(2+) is required as a cofactor.

The protein localises to the cytoplasm. Its function is as follows. One of several proteins that assist in the late maturation steps of the functional core of the 30S ribosomal subunit. Helps release RbfA from mature subunits. May play a role in the assembly of ribosomal proteins into the subunit. Circularly permuted GTPase that catalyzes slow GTP hydrolysis, GTPase activity is stimulated by the 30S ribosomal subunit. This Gemmatimonas aurantiaca (strain DSM 14586 / JCM 11422 / NBRC 100505 / T-27) protein is Small ribosomal subunit biogenesis GTPase RsgA.